The chain runs to 133 residues: DUF35 domain-containing scaffold protein (133 aa).

Zn(2+) is bound by residues Cys-23, Cys-26, Cys-37, and Cys-40.

The protein belongs to the scaffold protein DUF35 family. In terms of assembly, interacts with acetoacetyl-CoA thiolase and HMG-CoA synthase (HMGCS) that catalyzes the first and second step in the mevalonate pathway, respectively.

Functions as a scaffold to connect the acetoacetyl-CoA thiolase and HMG-CoA synthase (HMGCS) dimers in the channeling thiolase/HMGCS complex, which allows for efficient coupling of the endergonic thiolase reaction with the exergonic HMGCS reaction. This Methanothermobacter thermautotrophicus (strain ATCC 29096 / DSM 1053 / JCM 10044 / NBRC 100330 / Delta H) (Methanobacterium thermoautotrophicum) protein is DUF35 domain-containing scaffold protein.